A 333-amino-acid chain; its full sequence is Thiamine-monophosphate kinase (333 aa).

Residues aspartate 44, serine 58, threonine 59, and aspartate 60 each coordinate Mg(2+). Histidine 67 lines the substrate pocket. Aspartate 89 and aspartate 137 together coordinate Mg(2+). ATP-binding positions include 136-137 (GD) and arginine 162. Mg(2+) is bound at residue aspartate 224. An ATP-binding site is contributed by serine 226. Aspartate 227 provides a ligand contact to Mg(2+). Residues glutamate 278 and tryptophan 320 each contribute to the substrate site.

It belongs to the thiamine-monophosphate kinase family.

It catalyses the reaction thiamine phosphate + ATP = thiamine diphosphate + ADP. It participates in cofactor biosynthesis; thiamine diphosphate biosynthesis; thiamine diphosphate from thiamine phosphate: step 1/1. Catalyzes the ATP-dependent phosphorylation of thiamine-monophosphate (TMP) to form thiamine-pyrophosphate (TPP), the active form of vitamin B1. This chain is Thiamine-monophosphate kinase, found in Mycobacterium tuberculosis (strain CDC 1551 / Oshkosh).